The sequence spans 331 residues: 4-hydroxythreonine-4-phosphate dehydrogenase (331 aa).

2 residues coordinate substrate: His136 and Thr137. 3 residues coordinate a divalent metal cation: His166, His211, and His266. Lys274, Asn283, and Arg292 together coordinate substrate.

This sequence belongs to the PdxA family. As to quaternary structure, homodimer. It depends on Zn(2+) as a cofactor. The cofactor is Mg(2+). Co(2+) is required as a cofactor.

Its subcellular location is the cytoplasm. The catalysed reaction is 4-(phosphooxy)-L-threonine + NAD(+) = 3-amino-2-oxopropyl phosphate + CO2 + NADH. The protein operates within cofactor biosynthesis; pyridoxine 5'-phosphate biosynthesis; pyridoxine 5'-phosphate from D-erythrose 4-phosphate: step 4/5. Catalyzes the NAD(P)-dependent oxidation of 4-(phosphooxy)-L-threonine (HTP) into 2-amino-3-oxo-4-(phosphooxy)butyric acid which spontaneously decarboxylates to form 3-amino-2-oxopropyl phosphate (AHAP). This Thioalkalivibrio sulfidiphilus (strain HL-EbGR7) protein is 4-hydroxythreonine-4-phosphate dehydrogenase.